The sequence spans 1411 residues: DNA-directed RNA polymerase subunit beta' (1411 aa).

Zn(2+) contacts are provided by Cys69, Cys71, Cys84, and Cys87. Mg(2+) contacts are provided by Asp461, Asp463, and Asp465. Residues Cys809, Cys883, Cys890, and Cys893 each coordinate Zn(2+).

The protein belongs to the RNA polymerase beta' chain family. In terms of assembly, the RNAP catalytic core consists of 2 alpha, 1 beta, 1 beta' and 1 omega subunit. When a sigma factor is associated with the core the holoenzyme is formed, which can initiate transcription. Requires Mg(2+) as cofactor. Zn(2+) serves as cofactor.

The enzyme catalyses RNA(n) + a ribonucleoside 5'-triphosphate = RNA(n+1) + diphosphate. DNA-dependent RNA polymerase catalyzes the transcription of DNA into RNA using the four ribonucleoside triphosphates as substrates. This is DNA-directed RNA polymerase subunit beta' from Ehrlichia ruminantium (strain Welgevonden).